The following is an 89-amino-acid chain: UPF0297 protein lp_2275 (89 aa).

The protein belongs to the UPF0297 family.

The chain is UPF0297 protein lp_2275 from Lactiplantibacillus plantarum (strain ATCC BAA-793 / NCIMB 8826 / WCFS1) (Lactobacillus plantarum).